Here is a 706-residue protein sequence, read N- to C-terminus: Sodium- and chloride-dependent glycine transporter 1 (706 aa).

The tract at residues 1–26 (MSGGDTRAAIARPRMAAAHGPVAPSS) is disordered. Residues 1–108 (MSGGDTRAAI…KRGNWGNQIE (108 aa)) are Cytoplasmic-facing. The segment covering 7-18 (RAAIARPRMAAA) has biased composition (low complexity). Transmembrane regions (helical) follow at residues 109-129 (FVLT…FPYL), 136-156 (GAFM…LFFM), and 188-208 (VSTY…YYFF). Over 209–285 (SSMTHVLPWA…LSDDIGNFGE (77 aa)) the chain is Extracellular. 9 consecutive transmembrane segments (helical) span residues 286 to 306 (VRLP…LCLI), 315 to 335 (VVYF…VRGV), 360 to 380 (VWGD…GGLI), 407 to 427 (SVYA…HLGV), 450 to 470 (LLPI…LLGL), 506 to 526 (VAGF…WLLL), 530 to 550 (YAAS…IMYI), 570 to 590 (LFFQ…ILVF), and 610 to 630 (VAIG…YAMF). At 631-706 (RLCRTDGDTL…GSSRLQDSRI (76 aa)) the chain is on the cytoplasmic side. Phosphoserine occurs at positions 673 and 698. The essential for interaction with EXOC1 stretch occupies residues 695-706 (SNGSSRLQDSRI).

Belongs to the sodium:neurotransmitter symporter (SNF) (TC 2.A.22) family. SLC6A9 subfamily. As to quaternary structure, interacts with EXOC1; interaction increases the transporter capacity of SLC6A9 probably by promoting its insertion into the cell membrane. Interacts with EXOC3 and EXOC4. Expressed in the brain, kidney, pancreas, lung, placenta and liver. As to expression, expressed only in the brain.

The protein localises to the cell membrane. It carries out the reaction glycine(out) + chloride(out) + 2 Na(+)(out) = glycine(in) + chloride(in) + 2 Na(+)(in). Inhibited by sarcosine. Its function is as follows. Sodium- and chloride-dependent glycine transporter. Essential for regulating glycine concentrations at inhibitory glycinergic synapses. Functionally, sodium- and chloride-dependent glycine transporter. This Homo sapiens (Human) protein is Sodium- and chloride-dependent glycine transporter 1 (SLC6A9).